A 352-amino-acid polypeptide reads, in one-letter code: Probable RNA methyltransferase Mpe_A3613 (352 aa).

Glu-88 (proton acceptor) is an active-site residue. In terms of domain architecture, Radical SAM core spans 91-317 (LLPRDGLCVS…TKLRRSAGQD (227 aa)). Residues Cys-98 and Cys-322 are joined by a disulfide bond. Positions 105, 109, and 112 each coordinate [4Fe-4S] cluster. S-adenosyl-L-methionine-binding positions include 150–151 (GE), Ser-180, 203–205 (SLH), and Asn-279. Cys-322 (S-methylcysteine intermediate) is an active-site residue.

The protein belongs to the radical SAM superfamily. RlmN family. Requires [4Fe-4S] cluster as cofactor.

It localises to the cytoplasm. This is Probable RNA methyltransferase Mpe_A3613 from Methylibium petroleiphilum (strain ATCC BAA-1232 / LMG 22953 / PM1).